A 415-amino-acid chain; its full sequence is Fructose-1,6-bisphosphatase, chloroplastic (415 aa).

The transit peptide at 1-57 (MASIGPATTTAVKLRSSIFNPQSSTLSPSQQCITFTKSLHSFPTATRHNVASGVRCM) directs the protein to the chloroplast. Mg(2+) is bound by residues Glu-135, Glu-164, Asp-185, Leu-187, and Asp-188. 188-191 (DGSS) is a substrate binding site. Positions 207–232 (SPNDECIVDSDHDDESQLSAEEQRCV) are involved in light regulation. Cysteines 231 and 236 form a disulfide. 5 residues coordinate substrate: Asn-295, Tyr-327, Tyr-345, Tyr-347, and Lys-357. Glu-363 is a Mg(2+) binding site.

The protein belongs to the FBPase class 1 family. As to quaternary structure, homotetramer. Mg(2+) is required as a cofactor.

It is found in the plastid. It localises to the chloroplast. It carries out the reaction beta-D-fructose 1,6-bisphosphate + H2O = beta-D-fructose 6-phosphate + phosphate. It functions in the pathway carbohydrate biosynthesis; Calvin cycle. The sequence is that of Fructose-1,6-bisphosphatase, chloroplastic from Spinacia oleracea (Spinach).